The chain runs to 307 residues: 4-hydroxybenzoate geranyltransferase 1 (307 aa).

8 consecutive transmembrane segments (helical) span residues 38 to 58 (PIGS…AADL), 62 to 82 (PKML…GCTI), 120 to 140 (LFIG…LAIV), 154 to 174 (ITYW…LLGS), 179 to 199 (GSVV…WTLV), 230 to 250 (MWIS…GLIL), 252 to 272 (IGLP…WQIF), and 286 to 306 (FVSN…GRLF).

The protein belongs to the UbiA prenyltransferase family. Mg(2+) is required as a cofactor. As to expression, expressed only in roots.

It is found in the endoplasmic reticulum membrane. It carries out the reaction 4-hydroxybenzoate + (2E)-geranyl diphosphate = 3-geranyl-4-hydroxybenzoate + diphosphate. Its function is as follows. Prenyltransferase involved in the biosynthesis of shikonin, a naphthoquinone secondary metabolite. Could accept only geranyl diphosphate and not dimethylallyl diphosphate, farnesyl diphosphate, or geranylgeranyl diphosphate as substrate. This Lithospermum erythrorhizon (Purple gromwell) protein is 4-hydroxybenzoate geranyltransferase 1 (PGT-1).